The chain runs to 669 residues: Glutaminase kidney isoform, mitochondrial (669 aa).

A mitochondrion-targeting transit peptide spans 1–54 (MMRLRGSGMLRDLLLRSPAGVSATLRRAQPLVTLCRRPRGGGRPAAGPAAAARL). A disordered region spans residues 68-118 (LARGLSSSPSEILQELGKGSTHPQPGVSPPAAPAAPGPKDGPGETDAFGNS). Over residues 93 to 103 (GVSPPAAPAAP) the composition is skewed to pro residues. Residues K130 and K164 each carry the N6-succinyllysine modification. S286 provides a ligand contact to substrate. At K311 the chain carries N6-acetyllysine. The interval 315–322 (GLRFNKLF) is highly mobile activation loop. Positions 335, 381, 388, 414, 466, and 484 each coordinate substrate. ANK repeat units lie at residues 585–614 (DSRTALHVAAAEGHVEVVKFLLEACKVNPF) and 619–648 (WNNTPMDEALHFGHHDVFKILQEYQVQYTP). A disordered region spans residues 647–669 (TPQGDSDNGKENQTVHKNLDGLL). A Phosphoserine modification is found at S652. The span at 653–669 (DNGKENQTVHKNLDGLL) shows a compositional bias: basic and acidic residues.

Belongs to the glutaminase family. Homotetramer, dimer of dimers. The tetramers can assemble into rod-like oligomers (in vitro), but the physiological significance of this is not clear. Interacts with RAF1 and MAP2K2. Interacts with ATCAY; the interaction is direct and may control GLS localization, negatively regulating its activity. Post-translationally, synthesized as a 74-kDa cytosolic precursor which is proteolytically processed by the mitochondrial-processing peptidase (MPP) via a 72-kDa intermediate to yield the mature mitochondrial 68- and 65-kDa subunits. In terms of tissue distribution, isoform 1 and isoform 3 are detected in brain cortex. Isoform 3 is highly expressed in astrocytoma, ganglioglioma and ependymoma. Isoform 1 is highly expressed in brain and kidney, but not detected in liver. Isoform 3 is highly expressed in heart and pancreas, detected at lower levels in placenta, lung, pancreas and kidney, but is not detected in liver. Isoform 2 is expressed in cardiac and skeletal muscle.

It localises to the mitochondrion. The protein resides in the cytoplasm. It is found in the cytosol. The protein localises to the mitochondrion matrix. It carries out the reaction L-glutamine + H2O = L-glutamate + NH4(+). With respect to regulation, isoform 1 and isoform 3 are activated by phosphate. Inhibited by BPTES. BPTES binds between subunits and favors dissociation of the tetramer into dimers. Inhibited by 6-diazo-5-oxo-L-norleucine (DON). Enzyme activity is stimulated by phosphorylation. In terms of biological role, catalyzes the first reaction in the primary pathway for the renal catabolism of glutamine. Plays a role in maintaining acid-base homeostasis. Regulates the levels of the neurotransmitter glutamate, the main excitatory neurotransmitter in the brain. Functionally, lacks catalytic activity. The sequence is that of Glutaminase kidney isoform, mitochondrial (GLS) from Homo sapiens (Human).